Reading from the N-terminus, the 729-residue chain is DNA topoisomerase 3 (729 aa).

In terms of domain architecture, Toprim spans 3-136; the sequence is KSVVIAEKPS…IKRLWISSVT (134 aa). Glutamate 9 and aspartate 105 together coordinate Mg(2+). The Topo IA-type catalytic domain occupies 153-594; it reads YDNLYASAVA…EMKNYTKEIV (442 aa). Residues 187–192 are interaction with DNA; it reads NCGRVQ. Tyrosine 310 functions as the O-(5'-phospho-DNA)-tyrosine intermediate in the catalytic mechanism. Basic and acidic residues predominate over residues 686-713; sequence ERRKKESGNKADKRDVQKYMKQQNKEEE. The disordered stretch occupies residues 686–719; the sequence is ERRKKESGNKADKRDVQKYMKQQNKEEEPLNNPF.

This sequence belongs to the type IA topoisomerase family. Requires Mg(2+) as cofactor.

The catalysed reaction is ATP-independent breakage of single-stranded DNA, followed by passage and rejoining.. Releases the supercoiling and torsional tension of DNA, which is introduced during the DNA replication and transcription, by transiently cleaving and rejoining one strand of the DNA duplex. Introduces a single-strand break via transesterification at a target site in duplex DNA. The scissile phosphodiester is attacked by the catalytic tyrosine of the enzyme, resulting in the formation of a DNA-(5'-phosphotyrosyl)-enzyme intermediate and the expulsion of a 3'-OH DNA strand. The free DNA strand then undergoes passage around the unbroken strand, thus removing DNA supercoils. Finally, in the religation step, the DNA 3'-OH attacks the covalent intermediate to expel the active-site tyrosine and restore the DNA phosphodiester backbone. The protein is DNA topoisomerase 3 of Bacillus cereus (strain ATCC 14579 / DSM 31 / CCUG 7414 / JCM 2152 / NBRC 15305 / NCIMB 9373 / NCTC 2599 / NRRL B-3711).